The chain runs to 176 residues: Cathelicidin-2 (176 aa).

An N-terminal signal peptide occupies residues 1 to 29 (METQRASLSLGRCSLWLLLLGLVLPSASA). Gln30 carries the pyrrolidone carboxylic acid modification. The propeptide occupies 30–130 (QALSYREAVL…DINCNELQSV (101 aa)). 2 disulfides stabilise this stretch: Cys85-Cys96 and Cys107-Cys124. The disordered stretch occupies residues 157–176 (IFPPIRPPFRPPLGPFPGRR). A Proline amide modification is found at Pro173. Positions 174-176 (GRR) are cleaved as a propeptide — removed in mature form.

Belongs to the cathelicidin family. In terms of processing, elastase is responsible for its maturation. As to expression, large granules of neutrophils.

The protein localises to the secreted. Exerts, in vitro, a potent antimicrobial activity. Probably due to an impairment of the function of the respiratory chain and of energy-dependent activities in the inner membrane of susceptible microorganisms. The chain is Cathelicidin-2 (CATHL2) from Bos taurus (Bovine).